A 2191-amino-acid chain; its full sequence is FRAS1-related extracellular matrix protein 1 (2191 aa).

An N-terminal signal peptide occupies residues methionine 1–alanine 29. Residues arginine 205 to aspartate 207 carry the Cell attachment site motif. CSPG repeat units follow at residues valine 300–glutamate 394, alanine 419–phenylalanine 506, and proline 527–tryptophan 621. Asparagine 341 is a glycosylation site (N-linked (GlcNAc...) asparagine). N-linked (GlcNAc...) asparagine glycosylation is found at asparagine 566 and asparagine 628. CSPG repeat units lie at residues lysine 648–serine 779, glutamine 801–threonine 892, and glutamate 912–serine 1007. An N-linked (GlcNAc...) asparagine glycan is attached at asparagine 1039. CSPG repeat units lie at residues proline 1049–threonine 1151, glutamate 1172–serine 1273, threonine 1294–tryptophan 1391, glycine 1412–serine 1504, leucine 1525–threonine 1614, and histidine 1650–methionine 1742. An N-linked (GlcNAc...) asparagine glycan is attached at asparagine 1180. Asparagine 1584 carries an N-linked (GlcNAc...) asparagine glycan. Residues alanine 1749–asparagine 1848 form the Calx-beta domain. Residues histidine 1874–aspartate 1921 are disordered. Residues proline 1875 to serine 1885 show a composition bias toward polar residues. Positions leucine 1895–leucine 1910 are enriched in low complexity. Residues histidine 2072 to valine 2186 enclose the C-type lectin domain. A disulfide bond links cysteine 2163 and cysteine 2177.

The protein belongs to the FRAS1 family. As to quaternary structure, interacts with FREM2. Expressed in epidermis and hair follicles. Expressed in many developing epidermal appendages, including the whisker and sensory vibrissae, cranial and trunk hair follicles, meibomian glands, teeth, footpads, eyelash primordia and invaginating mammary glands. Limb expression localizes to sheets of dermal cells on the apical and basal surfaces of the digits but, unlike FRAS1, is excluded from the apical ectodermal ridge. Usually expressed at higher level in dermal cells underlying the differentiating epithelial components, especially underlying the epidermis of the head, limbs, and eyelids. Expression in the eyelid dermis is apparent as early as 13 dpc. Postnatal expression in the skin is limited to the dermal papillae. In the kidney, it is expressed from 12.5 dpc in the mesenchyme surrounding the branching ureteric tree, with a strong expression in the more proximal regions of these tubules rather than at the proliferating and branching ends of the ureteric buds. In hair follicle, it is selectively expressed in the vibrissal hair primordia during development. Preferentially expressed in the whisker pad epithelia of 12.5 dpc embryos, in both the epithelial and mesenchymal cells of developing hair follicles. In the early stages of hair follicle development (i.e. stages 0-1), it is expressed in both hair placodes and dermal condensations. In stage 2, it is detected in dermal condensations and adjacent epithelia, but not in the upper region of the hair follicles. Expressed at the tip of developing hair follicles in the later stages (i.e. stages 3-5).

It is found in the secreted. Its subcellular location is the extracellular space. The protein resides in the extracellular matrix. It localises to the basement membrane. Functionally, extracellular matrix protein that plays a role in epidermal differentiation and is required for epidermal adhesion during embryonic development. This Mus musculus (Mouse) protein is FRAS1-related extracellular matrix protein 1 (Frem1).